A 340-amino-acid polypeptide reads, in one-letter code: MITLQNVVKEYTSRNNKVLAVDHVDLEIEQGEIFGVVGYSGAGKSTLIRMFNGLELPSAGTVEVDNLLISQIRGSKLRKARQQIGMIFQHFNLLWSRTVAENIAFPLEIAGVRGEKRRFRVNELIRLVGLEGKENAYPAELSGGQKQRVGIARALANNPKVLLCDEATSALDPQTTDEVLELLLDINKRLNLTIIVITHEMHVIRKICNRVAVMENGKVVELGDVLDVFRHPQEKVTQRFVRQVTDSDETEELIHLLLDNYAEGKIVKLLFMSENATQPVISQVAKENDVMLNVLHGNLTQTQNGAYGTLYVQVLGTEDAINASLTQLRQLKVETEVLER.

One can recognise an ABC transporter domain in the interval 2-241 (ITLQNVVKEY…PQEKVTQRFV (240 aa)). ATP is bound at residue 38–45 (GYSGAGKS).

This sequence belongs to the ABC transporter superfamily. Methionine importer (TC 3.A.1.24) family. In terms of assembly, the complex is composed of two ATP-binding proteins (MetN), two transmembrane proteins (MetI) and a solute-binding protein (MetQ).

Its subcellular location is the cell membrane. It carries out the reaction L-methionine(out) + ATP + H2O = L-methionine(in) + ADP + phosphate + H(+). The catalysed reaction is D-methionine(out) + ATP + H2O = D-methionine(in) + ADP + phosphate + H(+). Its function is as follows. Part of the ABC transporter complex MetNIQ involved in methionine import. Responsible for energy coupling to the transport system. This Listeria monocytogenes serovar 1/2a (strain ATCC BAA-679 / EGD-e) protein is Methionine import ATP-binding protein MetN 2.